The following is a 509-amino-acid chain: uncharacterized protein (509 aa).

Positions 1–32 (MMLPKRNIIHFLRKRAIFIVAAFIALLTVDYS) are cleaved as a signal peptide.

Its subcellular location is the endoplasmic reticulum. This is an uncharacterized protein from Schizosaccharomyces pombe (strain 972 / ATCC 24843) (Fission yeast).